A 134-amino-acid polypeptide reads, in one-letter code: Large-conductance mechanosensitive channel (134 aa).

Helical transmembrane passes span 16–36 (VVDMAVGIIIGVAFGKIVSSF) and 76–96 (GVFLQAIFDFIIIAFAIFIAV).

Belongs to the MscL family. As to quaternary structure, homopentamer.

It is found in the cell inner membrane. Its function is as follows. Channel that opens in response to stretch forces in the membrane lipid bilayer. May participate in the regulation of osmotic pressure changes within the cell. The polypeptide is Large-conductance mechanosensitive channel (Thioalkalivibrio sulfidiphilus (strain HL-EbGR7)).